Here is a 238-residue protein sequence, read N- to C-terminus: Valine-rich protein (238 aa).

Positions 1–16 (MQAVLLVVALFGAALA) are cleaved as a signal peptide.

In terms of tissue distribution, prismatic layer of shell (at protein level). Expressed primarily in the mantle with highest level in the mantle edge and lower level in the mantle pallium.

The protein localises to the secreted. This is Valine-rich protein from Margaritifera margaritifera (Freshwater pearl mussel).